The sequence spans 576 residues: MAGUK p55 subfamily member 7 (576 aa).

2 L27 domains span residues 10 to 64 and 65 to 122; these read SEMG…EDCA and PTPV…YDPE. The region spanning 139 to 220 is the PDZ domain; sequence IIRLVKNKEP…AITFKVVPGI (82 aa). One can recognise an SH3 domain in the interval 228-298; it reads EPKMFIKALF…PSKHFQERRL (71 aa). Residues 368–560 enclose the Guanylate kinase-like domain; that stretch reads HRLVVLVGPT…AFSELKQALK (193 aa).

Belongs to the MAGUK family.

Its subcellular location is the membrane. The protein resides in the cell junction. It localises to the tight junction. It is found in the adherens junction. In terms of biological role, acts as an important adapter that promotes epithelial cell polarity and tight junction formation. Involved in the assembly of protein complexes at sites of cell-cell contact. The protein is MAGUK p55 subfamily member 7 (mpp7) of Danio rerio (Zebrafish).